The primary structure comprises 524 residues: Tissue-resident T-cell transcription regulator protein ZNF683 (524 aa).

Basic and acidic residues predominate over residues 130–142 (NKDKLGKQPERAG). Disordered regions lie at residues 130 to 166 (NKDK…NRKS) and 265 to 303 (QALP…LSSQ). 2 C2H2-type zinc fingers span residues 322–344 (YECN…LRVH) and 350–372 (FQCA…HLVH). A C2H2-type 3; degenerate zinc finger spans residues 398–420 (REREVCHKRFSSSSNLKTHLRLH). A C2H2-type 4 zinc finger spans residues 426–448 (FQCSVCRSRFTQHIHLKLHHRLH).

This sequence belongs to the krueppel C2H2-type zinc-finger protein family. As to expression, expressed in terminally differentiated effector CD8(+) T-cells, but not in naive and central memory cells. Expressed in terminally differentiated natural killer (NK) cells and natural killer (NKT) T-cells (at protein level). Expressed strongly in effector-type CD8(+) T-cells and weakly in naive and memory CD8(+) T-cells. Expressed in terminally differentiated natural killer (NK) cells. Isoform 2 is strongly expressed in effector CD8(+) T and natural killer (NK) cells. Isoform 1 is expressed in effector CD8(+) T and natural killer (NK) cells. (Microbial infection) Expressed in cytomegalovirus (CMV)-infected effector CD8(+) T-cells (at protein level).

The protein resides in the nucleus. In terms of biological role, transcription factor that mediates a transcriptional program in various innate and adaptive immune tissue-resident lymphocyte T-cell types such as tissue-resident memory T (Trm), natural killer (trNK) and natural killer T (NKT) cells and negatively regulates gene expression of proteins that promote the egress of tissue-resident T-cell populations from non-lymphoid organs. Plays a role in the development, retention and long-term establishment of adaptive and innate tissue-resident lymphocyte T cell types in non-lymphoid organs, such as the skin and gut, but also in other nonbarrier tissues like liver and kidney, and therefore may provide immediate immunological protection against reactivating infections or viral reinfection. Also plays a role in the differentiation of both thymic and peripheral NKT cells. Negatively regulates the accumulation of interferon-gamma (IFN-gamma) in NKT cells at steady state or after antigenic stimulation. Positively regulates granzyme B production in NKT cells after innate stimulation. Associates with the transcriptional repressor PRDM1/BLIMP1 to chromatin at gene promoter regions. Lacks transcriptional repressor activity. Binds to DNA within promoter regions of the transcriptional repressor PRDM1/BLIMP1 target sites. Unable to regulate interferon-gamma (IFN-gamma) production in cytomegalovirus (CMV)-infected effector CD8(+) T-cells. Its function is as follows. Transcriptional repressor that binds to DNA within promoter regions of the transcriptional repressor PRDM1/BLIMP1 target sites. Regulates interferon-gamma (IFN-gamma) production in cytomegalovirus (CMV)-infected effector CD8(+) T cells. This Homo sapiens (Human) protein is Tissue-resident T-cell transcription regulator protein ZNF683.